Consider the following 285-residue polypeptide: (2Z,6Z)-farnesyl diphosphate synthase CPT6, chloroplastic (285 aa).

A chloroplast-targeting transit peptide spans 1-30 (MNSLFVGRPIVKSSYNVYTLPSSICGGHFF). Residue aspartate 65 is part of the active site.

It belongs to the UPP synthase family. Requires Mg(2+) as cofactor. Expressed in roots and red fruits.

It is found in the plastid. It localises to the chloroplast. It carries out the reaction 2 isopentenyl diphosphate + dimethylallyl diphosphate = (2Z,6Z)-farnesyl diphosphate + 2 diphosphate. The enzyme catalyses isopentenyl diphosphate + dimethylallyl diphosphate = neryl diphosphate + diphosphate. It catalyses the reaction neryl diphosphate + isopentenyl diphosphate = (2Z,6Z)-farnesyl diphosphate + diphosphate. In terms of biological role, uses neryl diphosphate to catalyze the cis-prenyl chain elongation and produce the 15 carbon product (2Z,6Z)-farnesyl diphosphate. The protein is (2Z,6Z)-farnesyl diphosphate synthase CPT6, chloroplastic of Solanum lycopersicum (Tomato).